We begin with the raw amino-acid sequence, 61 residues long: Small ribosomal subunit protein uS14 (61 aa).

Cys-24, Cys-27, Cys-40, and Cys-43 together coordinate Zn(2+).

This sequence belongs to the universal ribosomal protein uS14 family. Zinc-binding uS14 subfamily. As to quaternary structure, part of the 30S ribosomal subunit. Contacts proteins S3 and S10. Requires Zn(2+) as cofactor.

Binds 16S rRNA, required for the assembly of 30S particles and may also be responsible for determining the conformation of the 16S rRNA at the A site. In Mycoplasmopsis pulmonis (strain UAB CTIP) (Mycoplasma pulmonis), this protein is Small ribosomal subunit protein uS14.